A 295-amino-acid chain; its full sequence is sn-glycerol-3-phosphate transport system permease protein UgpA (295 aa).

Over 1–11 (MSSSRPVFRSR) the chain is Cytoplasmic. The chain crosses the membrane as a helical span at residues 12 to 32 (WLPYLLVAPQLIITVIFFIWP). Residues 33-80 (AGEALWYSLQSVDPFGFSSQFVGLDNFVTLFHDSYYLDAFWTTIKFST) are Periplasmic-facing. The 209-residue stretch at 76 to 284 (IKFSTFVTVS…FLVIVLTVVQ (209 aa)) folds into the ABC transmembrane type-1 domain. Residues 81–101 (FVTVSGLLVSLFFAALVEYIV) traverse the membrane as a helical segment. At 102–109 (RGSRFYQT) the chain is on the cytoplasmic side. A helical membrane pass occupies residues 110–130 (LMLLPYAVAPAVAAVLWIFLF). Residues 131-156 (NPGRGLITHFLAEFGYDWNHAQNSGQ) lie on the Periplasmic side of the membrane. The chain crosses the membrane as a helical span at residues 157-177 (AMFLVVFASVWKQISYNFLFF). Over 178–207 (YAALQSIPRSLIEAAAIDGAGPIRRFFKIA) the chain is Cytoplasmic. A helical membrane pass occupies residues 208 to 228 (LPLIAPVSFFLLVVNLVYAFF). The Periplasmic portion of the chain corresponds to 229-262 (DTFPVIDAATSGGPVQATTTLIYKIYREGFTGLD). Residues 263–283 (LASSAAQSVVLMFLVIVLTVV) form a helical membrane-spanning segment. At 284–295 (QFRYVESKVRYQ) the chain is on the cytoplasmic side.

This sequence belongs to the binding-protein-dependent transport system permease family. UgpAE subfamily. As to quaternary structure, the complex is composed of two ATP-binding proteins (UgpC), two transmembrane proteins (UgpA and UgpE) and a solute-binding protein (UgpB).

The protein localises to the cell inner membrane. Part of the ABC transporter complex UgpBAEC involved in sn-glycerol-3-phosphate (G3P) import. Probably responsible for the translocation of the substrate across the membrane. The polypeptide is sn-glycerol-3-phosphate transport system permease protein UgpA (ugpA) (Escherichia coli (strain UTI89 / UPEC)).